A 365-amino-acid polypeptide reads, in one-letter code: Probable tRNA pseudouridine synthase B (365 aa).

Asp43 acts as the Nucleophile in catalysis. The 77-residue stretch at 209–285 (YPKIVVKRSA…DHIFLEADDG (77 aa)) folds into the PUA domain. The interval 300-365 (SGSGLHKDIQ…GKERHGRDHQ (66 aa)) is disordered. 3 stretches are compositionally biased toward basic and acidic residues: residues 304-318 (LHKD…KDTR), 326-336 (TGPEKTADRVW), and 354-365 (GGGKERHGRDHQ).

It belongs to the pseudouridine synthase TruB family. Type 2 subfamily.

It catalyses the reaction uridine(55) in tRNA = pseudouridine(55) in tRNA. Its function is as follows. Could be responsible for synthesis of pseudouridine from uracil-55 in the psi GC loop of transfer RNAs. This is Probable tRNA pseudouridine synthase B from Thermoplasma acidophilum (strain ATCC 25905 / DSM 1728 / JCM 9062 / NBRC 15155 / AMRC-C165).